The primary structure comprises 326 residues: Olfactory receptor 11H1 (326 aa).

Topologically, residues Met1–Ser44 are extracellular. Asn13 and Asn18 each carry an N-linked (GlcNAc...) asparagine glycan. Residues Leu45 to Trp65 form a helical membrane-spanning segment. At Cys66–Thr72 the chain is on the cytoplasmic side. A helical transmembrane segment spans residues Pro73–Val93. At Pro94 to Cys112 the chain is on the extracellular side. Residue Asn106 is glycosylated (N-linked (GlcNAc...) asparagine). A disulfide bridge links Cys112 with Cys194. Residues Phe113–Met133 form a helical membrane-spanning segment. The Cytoplasmic segment spans residues Ala134 to Lys158. The chain crosses the membrane as a helical span at residues Leu159–Ser179. Residues Gln180–Thr216 lie on the Extracellular side of the membrane. A helical transmembrane segment spans residues Leu217–Leu237. The Cytoplasmic segment spans residues Lys238–His259. The helical transmembrane segment at Leu260 to Gly280 threads the bilayer. Over His281–Lys287 the chain is Extracellular. A helical membrane pass occupies residues Ile288–Gln308. Topologically, residues Asn309–Ile326 are cytoplasmic.

Belongs to the G-protein coupled receptor 1 family.

It localises to the cell membrane. In terms of biological role, odorant receptor. The protein is Olfactory receptor 11H1 (OR11H1) of Homo sapiens (Human).